The sequence spans 245 residues: Small ribosomal subunit protein uS2 (245 aa).

The protein belongs to the universal ribosomal protein uS2 family.

The sequence is that of Small ribosomal subunit protein uS2 from Pseudomonas putida (strain ATCC 47054 / DSM 6125 / CFBP 8728 / NCIMB 11950 / KT2440).